We begin with the raw amino-acid sequence, 346 residues long: Uroporphyrinogen decarboxylase (346 aa).

Residues 21-25, D71, Y146, S201, and H316 contribute to the substrate site; that span reads RQAGR.

It belongs to the uroporphyrinogen decarboxylase family. As to quaternary structure, homodimer.

The protein resides in the cytoplasm. The enzyme catalyses uroporphyrinogen III + 4 H(+) = coproporphyrinogen III + 4 CO2. It functions in the pathway porphyrin-containing compound metabolism; protoporphyrin-IX biosynthesis; coproporphyrinogen-III from 5-aminolevulinate: step 4/4. Its function is as follows. Catalyzes the decarboxylation of four acetate groups of uroporphyrinogen-III to yield coproporphyrinogen-III. This is Uroporphyrinogen decarboxylase from Rickettsia africae (strain ESF-5).